Reading from the N-terminus, the 447-residue chain is Serine/threonine-protein phosphatase 2A 55 kDa regulatory subunit B alpha isoform (447 aa).

Position 2 is an N-acetylalanine (Ala-2). 7 WD repeats span residues 11 to 80 (QWCF…FQSH), 94 to 174 (EKIN…IFAN), 175 to 218 (AHTY…VDIK), 227 to 270 (EVIT…KLFE), 288 to 325 (ISDV…TYQV), 347 to 381 (ECCW…TLEA), and 414 to 446 (DFNK…QDKV).

It belongs to the phosphatase 2A regulatory subunit B family. As to quaternary structure, PP2A consists of a common heterodimeric core enzyme, composed of a 36 kDa catalytic subunit (subunit C) and a 65 kDa constant regulatory subunit (PR65 or subunit A), that associates with a variety of regulatory subunits. Proteins that associate with the core dimer include three families of regulatory subunits B (the R2/B/PR55/B55, R3/B''/PR72/PR130/PR59 and R5/B'/B56 families), the 48 kDa variable regulatory subunit, viral proteins, and cell signaling molecules. Interacts with the PP2A C catalytic subunit PPP2CA. Interacts with the PP2A A subunit PPP2R1A. Interacts with TP53. Interacts with IER5. Interacts with MFHAS1; the interaction is direct. Interacts with PABIR1/FAM122A (via its N-terminus); the interaction is direct and inhibits PP2A activity. Interacts with ARPP19; the interaction is direct and inhibits PP2A activity. Interacts with CRTC3. As to expression, expressed in all tissues examined.

In terms of biological role, substrate-recognition subunit of protein phosphatase 2A (PP2A) that plays a key role in cell cycle by controlling mitosis entry and exit. Involved in chromosome clustering during late mitosis by mediating dephosphorylation of MKI67. Essential for serine/threonine-protein phosphatase 2A-mediated dephosphorylation of WEE1, preventing its ubiquitin-mediated proteolysis, increasing WEE1 protein levels, and promoting the G2/M checkpoint. The sequence is that of Serine/threonine-protein phosphatase 2A 55 kDa regulatory subunit B alpha isoform (PPP2R2A) from Homo sapiens (Human).